A 319-amino-acid chain; its full sequence is Coiled-coil domain-containing protein PF3D7_1144200 (319 aa).

Residues 1–12 (MSEEHSNDHIED) show a composition bias toward basic and acidic residues. Disordered regions lie at residues 1 to 43 (MSEE…SESS) and 112 to 158 (KLEK…NQHN). Positions 16 to 26 (CSQNCDETNSP) are enriched in polar residues. 2 stretches are compositionally biased toward basic and acidic residues: residues 27 to 36 (KNEKDEKDFK) and 112 to 131 (KLEKEKEKNEKKEKKEKKVT). 3 coiled-coil regions span residues 100-134 (DLANKKENKTKFKLEKEKEKNEKKEKKEKKVTNDS), 166-242 (ELNE…IKKN), and 281-310 (NSNCEQIQNVRDEFAELKNDLNKIMNLINI). Positions 132 to 150 (NDSTNNKNKNNSVPFLNEN) are enriched in low complexity.

This is Coiled-coil domain-containing protein PF3D7_1144200 from Plasmodium falciparum (isolate 3D7).